Reading from the N-terminus, the 165-residue chain is Protein SprT (165 aa).

Positions 10–158 (EACYRQAEHF…CRRCKATLVF (149 aa)) constitute a SprT-like domain. A Zn(2+)-binding site is contributed by His69. The active site involves Glu70. His73 provides a ligand contact to Zn(2+).

This sequence belongs to the SprT family. It depends on Zn(2+) as a cofactor.

It is found in the cytoplasm. This Pseudomonas aeruginosa (strain UCBPP-PA14) protein is Protein SprT.